Reading from the N-terminus, the 210-residue chain is UPF0301 protein M446_6268 (210 aa).

The protein belongs to the UPF0301 (AlgH) family.

This Methylobacterium sp. (strain 4-46) protein is UPF0301 protein M446_6268.